The primary structure comprises 413 residues: Phosphoglycerate kinase (413 aa).

Residues 24–26 (DFN), Arg39, 62–65 (HLSR), Arg123, and Arg165 contribute to the substrate site. ATP contacts are provided by residues Lys216, Glu343, and 369 to 372 (GGDS).

It belongs to the phosphoglycerate kinase family. In terms of assembly, monomer.

The protein localises to the cytoplasm. The enzyme catalyses (2R)-3-phosphoglycerate + ATP = (2R)-3-phospho-glyceroyl phosphate + ADP. Its pathway is carbohydrate degradation; glycolysis; pyruvate from D-glyceraldehyde 3-phosphate: step 2/5. The polypeptide is Phosphoglycerate kinase (Mycoplasmoides gallisepticum (strain R(low / passage 15 / clone 2)) (Mycoplasma gallisepticum)).